Reading from the N-terminus, the 303-residue chain is Protein transport protein SEC13-2 (303 aa).

6 WD repeats span residues 7-46 (AHEG…NSSS), 53-95 (GHEG…GKMQ), 102-143 (VHSA…IAST), 149-202 (AHKF…ETYV), 209-251 (GHKD…KKND), and 261-300 (KFEQ…KWEE).

This sequence belongs to the WD repeat SEC13 family. The COPII coat is composed of at least 5 proteins: the SEC23/24 complex, the SEC13/31 complex, and the protein SAR1. Component of the nuclear pore complex (NPC). NPC constitutes the exclusive means of nucleocytoplasmic transport. NPCs allow the passive diffusion of ions and small molecules and the active, nuclear transport receptor-mediated bidirectional transport of macromolecules such as proteins, RNAs, ribonucleoparticles (RNPs), and ribosomal subunits across the nuclear envelope. Due to its 8-fold rotational symmetry, all subunits are present with 8 copies or multiples thereof.

It is found in the cytoplasmic vesicle. It localises to the COPII-coated vesicle membrane. The protein resides in the endoplasmic reticulum membrane. Its subcellular location is the nucleus. The protein localises to the nuclear pore complex. Its function is as follows. Component of the coat protein complex II (COPII) which promotes the formation of transport vesicles from the endoplasmic reticulum (ER). The coat has two main functions, the physical deformation of the endoplasmic reticulum membrane into vesicles and the selection of cargo molecules. It also functions as a component of the nuclear pore complex (NPC). NPC components, collectively referred to as nucleoporins (NUPs), can play the role of both NPC structural components and of docking or interaction partners for transiently associated nuclear transport factors. SEC13 is required for efficient mRNA export from the nucleus to the cytoplasm and for correct nuclear pore biogenesis and distribution. This Candida glabrata (strain ATCC 2001 / BCRC 20586 / JCM 3761 / NBRC 0622 / NRRL Y-65 / CBS 138) (Yeast) protein is Protein transport protein SEC13-2 (SEC132).